The following is a 61-amino-acid chain: Hepcidin (61 aa).

Residues 1-24 (LQVLTEEVGSIDSPVGEHQQPGGE) form a disordered region. A propeptide spanning residues 1–34 (LQVLTEEVGSIDSPVGEHQQPGGESMRLPEHFRF) is cleaved from the precursor. Cystine bridges form between cysteine 43-cysteine 59, cysteine 46-cysteine 49, cysteine 47-residue 55, and cysteine 50-cysteine 58.

Belongs to the hepcidin family.

The protein localises to the secreted. Its function is as follows. Seems to act as a signaling molecule involved in the maintenance of iron homeostasis. Seems to be required in conjunction with HFE to regulate both intestinal iron absorption and iron storage in macrophages. May also have antimicrobial activity. In Oncorhynchus mykiss (Rainbow trout), this protein is Hepcidin (hamp).